Reading from the N-terminus, the 771-residue chain is Ribonucleoside-diphosphate reductase large subunit (771 aa).

Positions 1–92 constitute an ATP-cone domain; the sequence is MFVIKRNGYK…ISNLHKETKK (92 aa). ATP contacts are provided by residues 5–6, 11–17, T53, D57, and K88; these read KR and ENVMFDK. Residues S202 and S217 each contribute to the GDP site. Residues 226-228, K243, and R256 contribute to the dTTP site; that span reads DSI. N427 is a binding site for GDP. The active-site Proton acceptor is the N427. C429 (cysteine radical intermediate) is an active-site residue. GDP-binding positions include E431 and 603 to 606; that span reads TAST. The active-site Proton acceptor is the E431.

Belongs to the ribonucleoside diphosphate reductase large chain family. In terms of assembly, interacts with RNR2/OPG047 subunit. The cofactor is Mg(2+).

The enzyme catalyses a 2'-deoxyribonucleoside 5'-diphosphate + [thioredoxin]-disulfide + H2O = a ribonucleoside 5'-diphosphate + [thioredoxin]-dithiol. Functionally, ribonucleoside-diphosphate reductase holoenzyme provides the precursors necessary for viral DNA synthesis. Allows virus growth in non-dividing cells. Catalyzes the biosynthesis of deoxyribonucleotides from the corresponding ribonucleotides. This chain is Ribonucleoside-diphosphate reductase large subunit (OPG080), found in Monkeypox virus.